The chain runs to 947 residues: Bifunctional glutamine synthetase adenylyltransferase/adenylyl-removing enzyme (947 aa).

The interval 1 to 440 is adenylyl removase; sequence MTPLSSPLSQ…VFNELIGDDE (440 aa). Positions 450–947 are adenylyl transferase; it reads SEPWREVWQD…ASWRKWLVAV (498 aa).

This sequence belongs to the GlnE family. It depends on Mg(2+) as a cofactor.

It carries out the reaction [glutamine synthetase]-O(4)-(5'-adenylyl)-L-tyrosine + phosphate = [glutamine synthetase]-L-tyrosine + ADP. The enzyme catalyses [glutamine synthetase]-L-tyrosine + ATP = [glutamine synthetase]-O(4)-(5'-adenylyl)-L-tyrosine + diphosphate. Involved in the regulation of glutamine synthetase GlnA, a key enzyme in the process to assimilate ammonia. When cellular nitrogen levels are high, the C-terminal adenylyl transferase (AT) inactivates GlnA by covalent transfer of an adenylyl group from ATP to specific tyrosine residue of GlnA, thus reducing its activity. Conversely, when nitrogen levels are low, the N-terminal adenylyl removase (AR) activates GlnA by removing the adenylyl group by phosphorolysis, increasing its activity. The regulatory region of GlnE binds the signal transduction protein PII (GlnB) which indicates the nitrogen status of the cell. The protein is Bifunctional glutamine synthetase adenylyltransferase/adenylyl-removing enzyme of Salmonella enteritidis PT4 (strain P125109).